A 147-amino-acid polypeptide reads, in one-letter code: 3-dehydroquinate dehydratase (147 aa).

Tyrosine 23 acts as the Proton acceptor in catalysis. Asparagine 74, histidine 80, and aspartate 87 together coordinate substrate. Histidine 100 (proton donor) is an active-site residue. Residues 101-102 (IS) and arginine 111 contribute to the substrate site.

The protein belongs to the type-II 3-dehydroquinase family. Homododecamer.

The enzyme catalyses 3-dehydroquinate = 3-dehydroshikimate + H2O. It participates in metabolic intermediate biosynthesis; chorismate biosynthesis; chorismate from D-erythrose 4-phosphate and phosphoenolpyruvate: step 3/7. Functionally, catalyzes a trans-dehydration via an enolate intermediate. This is 3-dehydroquinate dehydratase from Prochlorococcus marinus (strain MIT 9215).